Here is a 415-residue protein sequence, read N- to C-terminus: Ribulose bisphosphate carboxylase/oxygenase activase (415 aa).

37 to 44 is a binding site for ATP; sequence GRKGEGKT.

This sequence belongs to the RuBisCO activase family.

Its function is as follows. Activation of RuBisCO (ribulose-1,5-bisohosphate carboxylase/oxygenase; EC 4.1.1.39) involves the ATP-dependent carboxylation of the epsilon-amino group of lysine leading to a carbamate structure. This is Ribulose bisphosphate carboxylase/oxygenase activase (rca) from Anabaena sp. (strain CA / ATCC 33047).